A 211-amino-acid chain; its full sequence is LexA repressor (211 aa).

Positions 29–49 (VREICTAVGLRSTSTVHSHLN) form a DNA-binding region, H-T-H motif. Catalysis depends on for autocatalytic cleavage activity residues Ser131 and Lys169.

It belongs to the peptidase S24 family. As to quaternary structure, homodimer.

The enzyme catalyses Hydrolysis of Ala-|-Gly bond in repressor LexA.. Functionally, represses a number of genes involved in the response to DNA damage (SOS response), including recA and lexA. In the presence of single-stranded DNA, RecA interacts with LexA causing an autocatalytic cleavage which disrupts the DNA-binding part of LexA, leading to derepression of the SOS regulon and eventually DNA repair. The sequence is that of LexA repressor from Clostridioides difficile (strain 630) (Peptoclostridium difficile).